A 61-amino-acid chain; its full sequence is UPF0391 membrane protein Pnap_0032 (61 aa).

Transmembrane regions (helical) follow at residues 5-25 (AIIF…GVAA) and 33-53 (VLFG…ALGV).

It belongs to the UPF0391 family.

It is found in the cell membrane. This is UPF0391 membrane protein Pnap_0032 from Polaromonas naphthalenivorans (strain CJ2).